A 346-amino-acid polypeptide reads, in one-letter code: Partitioning defective 6 homolog alpha (346 aa).

The interval 1–116 (MARPQRTPAR…SNSLQRRKKG (116 aa)) is interaction with PRKCI and PRKCZ. The PB1 domain maps to 15-95 (IVEVKSKFDA…PPLRLLVQKR (81 aa)). The tract at residues 126 to 253 (RTRPPLLISL…VTVKPANQRN (128 aa)) is interaction with PARD3 and CDC42. Residues 133 to 150 (ISLPQDFRQVSSVIDVDL) form the Pseudo-CRIB domain. Residues 157 to 250 (RVRLHKHGSD…NLIVTVKPAN (94 aa)) enclose the PDZ domain. The segment at 257-346 (RGASGRLTGP…IRGDGSGFSL (90 aa)) is disordered. A phosphoserine mark is found at serine 278 and serine 345.

Belongs to the PAR6 family. Interacts with MAP2K5. Interacts with PARD3. Interacts with GTP-bound forms of CDC42, RHOQ/TC10 and RAC1. Interacts with the N-terminal part of PRKCI and PRKCZ. Part of a complex with PARD3, CDC42 or RAC1 and PRKCI or PRKCZ. Part of a complex with LLGL1 and PRKCI. Interacts with human T-cell leukemia virus type I TAX protein. Interacts with PALS1 and CRB3. Interacts with TGFBR1; involved in TGF-beta induced epithelial to mesenchymal transition. Interacts with ECT2 ('Thr-359' phosphorylated form) and PRKCI. Interacts with DCTN1 and PCM1. In terms of processing, phosphorylated by the TGF-beta receptor. Post-translationally, ubiquitinated by the SCF(FBXO31) complex, leading to its proteasomal degradation. In terms of tissue distribution, expressed in pancreas, skeletal muscle, brain and heart. Weakly expressed in kidney and placenta.

It is found in the cytoplasm. It localises to the cell membrane. The protein localises to the cell projection. The protein resides in the ruffle. Its subcellular location is the cell junction. It is found in the tight junction. It localises to the cytoskeleton. The protein localises to the microtubule organizing center. The protein resides in the centrosome. Its subcellular location is the centriolar satellite. Its function is as follows. Adapter protein involved in asymmetrical cell division and cell polarization processes. Probably involved in the formation of epithelial tight junctions. Association with PARD3 may prevent the interaction of PARD3 with F11R/JAM1, thereby preventing tight junction assembly. The PARD6-PARD3 complex links GTP-bound Rho small GTPases to atypical protein kinase C proteins. Regulates centrosome organization and function. Essential for the centrosomal recruitment of key proteins that control centrosomal microtubule organization. The sequence is that of Partitioning defective 6 homolog alpha (PARD6A) from Homo sapiens (Human).